We begin with the raw amino-acid sequence, 375 residues long: Enoyl-[acyl-carrier-protein] reductase [NADH] 1, chloroplastic (375 aa).

The transit peptide at 1–67 directs the protein to the chloroplast; sequence MGASAATGMQ…SSKRSGVAIR (67 aa). NAD(+) contacts are provided by residues glycine 91, tyrosine 98, 155 to 156, 202 to 203, and leucine 252; these read DA and SL. Catalysis depends on proton acceptor residues tyrosine 254 and tyrosine 264. NAD(+) contacts are provided by residues lysine 272 and 302–306; that span reads LGSRA.

It belongs to the short-chain dehydrogenases/reductases (SDR) family. FabI subfamily. In terms of assembly, homotetramer.

It is found in the plastid. It localises to the chloroplast. It carries out the reaction a 2,3-saturated acyl-[ACP] + NAD(+) = a (2E)-enoyl-[ACP] + NADH + H(+). Its pathway is lipid metabolism; fatty acid biosynthesis. In terms of biological role, catalyzes the NAD-dependent reduction of a carbon-carbon double bond in an enoyl moiety that is covalently linked to an acyl carrier protein (ACP). Catalyzes the last reduction step in the de novo synthesis cycle of fatty acids. Involved in the elongation cycle of fatty acids which are used in lipid metabolism. Required for normal plant growth. In Oryza sativa subsp. japonica (Rice), this protein is Enoyl-[acyl-carrier-protein] reductase [NADH] 1, chloroplastic.